We begin with the raw amino-acid sequence, 227 residues long: Glial cell line-derived neurotrophic factor (227 aa).

Residues 1–19 form the signal peptide; sequence MKLWAILAVCILLLSSVSS. Positions 20-93 are excised as a propeptide; the sequence is IPLPSNWLAG…EFIQDTIKRL (74 aa). Disordered stretches follow at residues 32 to 61 and 93 to 113; these read RSHLPDPQEGEDQVFGMDGAVPEDPTANMA and LKRSSNKQPPSRRDRGRQSLA. 3 cysteine pairs are disulfide-bonded: Cys-134/Cys-195, Cys-161/Cys-224, and Cys-165/Cys-226. Residues Asn-142 and Asn-178 are each glycosylated (N-linked (GlcNAc...) asparagine).

The protein belongs to the TGF-beta family. GDNF subfamily. Homodimer; disulfide-linked. Interacts with GFRA1 coreceptor and RET: forms a 2:2:2 ternary complex composed of GDNF ligand, GFRA1 and RET receptor. As to expression, from stage 22, expressed in somites and the pronephros. At stage 24 and 26, expressed in the pharyngeal arches I-III. At stage 31, expression in the eye, central nervous system and pharyngeal arches IV and V increases. Up to stage 34, expression becomes intense at the oral cavity and lateral line structures. At this stage, expression weakens in the pharyngeal arches, and increases in the epibranchial arches. Expressed in the digestive tract in stage 34 embryos.

The protein resides in the secreted. Neurotrophic factor that enhances survival and morphological differentiation of dopaminergic neurons and increases their high-affinity dopamine uptake. Acts by binding to its coreceptor, GFRA1, leading to autophosphorylation and activation of the RET receptor. In Xenopus laevis (African clawed frog), this protein is Glial cell line-derived neurotrophic factor.